A 64-amino-acid chain; its full sequence is Putative antitoxin VapB51 (64 aa).

Possibly the antitoxin component of a type II toxin-antitoxin (TA) system. Its cognate toxin is VapC51. This chain is Putative antitoxin VapB51, found in Mycobacterium tuberculosis (strain ATCC 25618 / H37Rv).